The following is a 141-amino-acid chain: HTH-type transcriptional repressor NsrR (141 aa).

An HTH rrf2-type domain is found at 2 to 129; it reads QLTSFTDYGL…DNYTLADLVE (128 aa). The H-T-H motif DNA-binding region spans 28–51; it reads ISEVTEVYGVSRNHMVKIINQLSR. Residues Cys-91, Cys-96, and Cys-102 each contribute to the [2Fe-2S] cluster site.

Requires [2Fe-2S] cluster as cofactor.

Nitric oxide-sensitive repressor of genes involved in protecting the cell against nitrosative stress. May require iron for activity. In Salmonella choleraesuis (strain SC-B67), this protein is HTH-type transcriptional repressor NsrR.